Here is a 212-residue protein sequence, read N- to C-terminus: Interleukin-6 (212 aa).

An N-terminal signal peptide occupies residues 1–27 (MNSVSTSAFGPVAFSLGLLLVLPAAFP). A disulfide bridge links Cys72 with Cys78. Residue Asn73 is glycosylated (N-linked (GlcNAc...) asparagine). Ser81 carries the phosphoserine modification. The cysteines at positions 101 and 111 are disulfide-linked. Asn172 carries N-linked (GlcNAc...) asparagine glycosylation.

This sequence belongs to the IL-6 superfamily. Component of a hexamer of two molecules each of IL6, IL6R and IL6ST; first binds to IL6R to associate with the signaling subunit IL6ST. Interacts with IL6R (via the N-terminal ectodomain); this interaction may be affected by IL6R-binding with SORL1, hence decreasing IL6 cis signaling. Interacts with SORL1 (via the N-terminal ectodomain); this interaction leads to IL6 internalization and lysosomal degradation. May form a trimeric complex with the soluble SORL1 ectodomain and soluble IL6R receptor; this interaction might stabilize circulating IL6, hence promoting IL6 trans signaling.

It localises to the secreted. In terms of biological role, cytokine with a wide variety of biological functions in immunity, tissue regeneration, and metabolism. Binds to IL6R, then the complex associates to the signaling subunit IL6ST/gp130 to trigger the intracellular IL6-signaling pathway. The interaction with the membrane-bound IL6R and IL6ST stimulates 'classic signaling', whereas the binding of IL6 and soluble IL6R to IL6ST stimulates 'trans-signaling'. Alternatively, 'cluster signaling' occurs when membrane-bound IL6:IL6R complexes on transmitter cells activate IL6ST receptors on neighboring receiver cells. Its function is as follows. IL6 is a potent inducer of the acute phase response. Rapid production of IL6 contributes to host defense during infection and tissue injury, but excessive IL6 synthesis is involved in disease pathology. In the innate immune response, is synthesized by myeloid cells, such as macrophages and dendritic cells, upon recognition of pathogens through toll-like receptors (TLRs) at the site of infection or tissue injury. In the adaptive immune response, is required for the differentiation of B cells into immunoglobulin-secreting cells. Plays a major role in the differentiation of CD4(+) T cell subsets. Essential factor for the development of T follicular helper (Tfh) cells that are required for the induction of germinal-center formation. Required to drive naive CD4(+) T cells to the Th17 lineage. Also required for proliferation of myeloma cells and the survival of plasmablast cells. Acts as an essential factor in bone homeostasis and on vessels directly or indirectly by induction of VEGF, resulting in increased angiogenesis activity and vascular permeability. Induces, through 'trans-signaling' and synergistically with IL1B and TNF, the production of VEGF. Involved in metabolic controls, is discharged into the bloodstream after muscle contraction increasing lipolysis and improving insulin resistance. 'Trans-signaling' in central nervous system also regulates energy and glucose homeostasis. Mediates, through GLP-1, crosstalk between insulin-sensitive tissues, intestinal L cells and pancreatic islets to adapt to changes in insulin demand. Also acts as a myokine. Plays a protective role during liver injury, being required for maintenance of tissue regeneration. Also has a pivotal role in iron metabolism by regulating HAMP/hepcidin expression upon inflammation or bacterial infection. Through activation of IL6ST-YAP-NOTCH pathway, induces inflammation-induced epithelial regeneration. The chain is Interleukin-6 (IL6) from Macaca thibetana (Pere David's macaque).